The primary structure comprises 352 residues: RNA demethylase ALKBH5 (352 aa).

Residues 18 to 34 (RDKVFEYSNGEKRKYRE) are compositionally biased toward basic and acidic residues. Residues 18–47 (RDKVFEYSNGEKRKYRESDDDESEYEERRD) form a disordered region. Residue Tyr-107 is part of the active site. 3 residues coordinate 2-oxoglutarate: Asn-161, Tyr-163, and His-172. Fe cation-binding residues include His-172, Asp-174, and His-234. An intrachain disulfide couples Cys-198 to Cys-235. 2-oxoglutarate-binding residues include His-234 and Arg-245. Positions 260–352 (LDSNSLSPSI…PTRRVKMRRH (93 aa)) are disordered. Residues 272-285 (PKRRHILKAKRSHR) show a composition bias toward basic residues. Composition is skewed to basic and acidic residues over residues 286–306 (KADPDAAHRPRVLEMDKELQR) and 315–343 (RHDDGSSENSWRRADDREPAARYTHDHAP).

It belongs to the alkB family. In terms of assembly, monomer. It depends on Fe(2+) as a cofactor.

Its subcellular location is the nucleus speckle. It catalyses the reaction an N(6)-methyladenosine in mRNA + 2-oxoglutarate + O2 = an adenosine in mRNA + formaldehyde + succinate + CO2. In terms of biological role, dioxygenase that specifically demethylates N(6)-methyladenosine (m6A) RNA, the most prevalent internal modification of messenger RNA (mRNA) in higher eukaryotes. Demethylates RNA by oxidative demethylation, which requires molecular oxygen, alpha-ketoglutarate and iron. Demethylation of m6A mRNA affects mRNA processing, translation and export. This chain is RNA demethylase ALKBH5 (alkbh5), found in Danio rerio (Zebrafish).